The following is a 117-amino-acid chain: Large ribosomal subunit protein eL34 (117 aa).

Ser-12 is subject to Phosphoserine. 2 positions are modified to N6-acetyllysine: Lys-36 and Lys-43. Residue Lys-108 forms a Glycyl lysine isopeptide (Lys-Gly) (interchain with G-Cter in SUMO2) linkage.

This sequence belongs to the eukaryotic ribosomal protein eL34 family. In terms of assembly, component of the large ribosomal subunit.

It localises to the cytoplasm. Its subcellular location is the cytosol. The protein localises to the endoplasmic reticulum. In terms of biological role, component of the large ribosomal subunit. The ribosome is a large ribonucleoprotein complex responsible for the synthesis of proteins in the cell. In Mus musculus (Mouse), this protein is Large ribosomal subunit protein eL34 (Rpl34).